We begin with the raw amino-acid sequence, 317 residues long: Zinc finger protein 771 (317 aa).

A Glycyl lysine isopeptide (Lys-Gly) (interchain with G-Cter in SUMO2) cross-link involves residue lysine 33. 8 consecutive C2H2-type zinc fingers follow at residues 63–85 (HACP…ARTH), 91–113 (FACT…GRTH), 119–141 (YQCP…RRRH), 147–169 (YACA…LRVH), 175–197 (YACP…RRTH), 203–225 (YACA…RRVH), 231–253 (HRCA…ARTH), and 259–281 (YPCT…RRAH).

It belongs to the krueppel C2H2-type zinc-finger protein family.

The protein resides in the nucleus. Its function is as follows. May be involved in transcriptional regulation. The polypeptide is Zinc finger protein 771 (Znf771) (Mus musculus (Mouse)).